We begin with the raw amino-acid sequence, 210 residues long: Probable GTP-binding protein EngB (210 aa).

An EngB-type G domain is found at 25 to 199 (CGIEVAFAGR…RQKLDSWFSE (175 aa)). Residues 33–40 (GRSNAGKS), 60–64 (GRTQL), 78–81 (DLPG), 145–148 (TKAD), and 178–180 (FSS) contribute to the GTP site. Residues S40 and T62 each coordinate Mg(2+).

Belongs to the TRAFAC class TrmE-Era-EngA-EngB-Septin-like GTPase superfamily. EngB GTPase family. It depends on Mg(2+) as a cofactor.

Its function is as follows. Necessary for normal cell division and for the maintenance of normal septation. The polypeptide is Probable GTP-binding protein EngB (Salmonella paratyphi C (strain RKS4594)).